Consider the following 206-residue polypeptide: Imidazoleglycerol-phosphate dehydratase (206 aa).

The protein belongs to the imidazoleglycerol-phosphate dehydratase family.

The protein resides in the cytoplasm. It carries out the reaction D-erythro-1-(imidazol-4-yl)glycerol 3-phosphate = 3-(imidazol-4-yl)-2-oxopropyl phosphate + H2O. The protein operates within amino-acid biosynthesis; L-histidine biosynthesis; L-histidine from 5-phospho-alpha-D-ribose 1-diphosphate: step 6/9. The polypeptide is Imidazoleglycerol-phosphate dehydratase (Leptospira interrogans serogroup Icterohaemorrhagiae serovar copenhageni (strain Fiocruz L1-130)).